The sequence spans 468 residues: Peripherin (468 aa).

Residues 1–16 show a composition bias toward low complexity; it reads MSHHSSGLRSSISSTS. The disordered stretch occupies residues 1–22; the sequence is MSHHSSGLRSSISSTSYRRTFG. Residues 1-96 form a head region; it reads MSHHSSGLRS…FLATRSNEKQ (96 aa). At Y17 the chain carries 3'-nitrotyrosine. Phosphoserine occurs at positions 28, 50, and 59. Residues 94–404 enclose the IF rod domain; that stretch reads EKQELQELND…KLLEGEESRI (311 aa). The segment at 97–129 is coil 1A; sequence ELQELNDRFANFIEKVRFLEQQNAALRGELSQA. Residues 130–140 form a linker 1 region; that stretch reads RGQEPARADQL. The tract at residues 141–236 is coil 1B; sequence CQQELRELRR…KLHEEELRDL (96 aa). The segment at 237–259 is linker 2; sequence QVSVESQQVQQVEVEATVKPELT. Residues 260-402 form a coil 2 region; that stretch reads AALRDIRAQY…YRKLLEGEES (143 aa). Position 376 is a 3'-nitrotyrosine (Y376). Residues 403-468 form a tail region; it reads RISVPVHSFA…ELDKSSIHSY (66 aa). The tract at residues 445 to 468 is disordered; it reads GEKVVTESQKEQHSELDKSSIHSY. A Phosphotyrosine modification is found at Y468.

It belongs to the intermediate filament family. Forms homodimers (in vitro). Homopolymerizes into a filamentous network (in vitro). Forms heterodimers with NEFL, NEFM or NEFH (in vitro). Interacts with DST (via C-terminus). Interacts with RAB7A; the interaction is direct. Interacts with PRKCE (via phorbol-ester/DAG-type 2 domain). Post-translationally, phosphorylated; phosphorylation increases after nerve injury in regenerating neurons. As to expression, expressed in hypoglossal motor neurons (at protein level). Expressed in the small and large sensory neurons of the dorsal root ganglion (at protein level). Expressed in cutaneous and muscular sensory neurons.

Its subcellular location is the cytoplasm. The protein localises to the cytoskeleton. It is found in the cell projection. The protein resides in the axon. It localises to the perikaryon. Its function is as follows. Class-III neuronal intermediate filament protein. My form an independent structural network without the involvement of other neurofilaments or may cooperate with the neuronal intermediate filament proteins NEFL, NEFH, NEFM and INA to form a filamentous network. Assembly of the neuronal intermediate filaments may be regulated by RAB7A. Plays a role in the development of unmyelinated sensory neurons. May be involved in axon elongation and axon regeneration after injury. Inhibits neurite extension in type II spiral ganglion neurons in the cochlea. This Rattus norvegicus (Rat) protein is Peripherin (Prph).